Reading from the N-terminus, the 491-residue chain is Limb region 1 homolog-like protein (491 aa).

Residues Met-1–Thr-20 are Extracellular-facing. Residues Ile-21–Phe-41 form a helical membrane-spanning segment. Residues Lys-42–Lys-59 are Cytoplasmic-facing. The helical transmembrane segment at Ile-60–Pro-80 threads the bilayer. At Ile-81 to Asn-111 the chain is on the extracellular side. Residues Leu-112–Thr-132 traverse the membrane as a helical segment. Topologically, residues Glu-133–Ala-152 are cytoplasmic. A helical membrane pass occupies residues Val-153–Leu-173. Residues His-174–Tyr-192 lie on the Extracellular side of the membrane. The helical transmembrane segment at Leu-193–Leu-213 threads the bilayer. Over Ser-214 to Asn-292 the chain is Cytoplasmic. The helical transmembrane segment at Leu-293–Val-313 threads the bilayer. At Cys-314 to Ser-346 the chain is on the extracellular side. Residues Leu-347–Phe-367 traverse the membrane as a helical segment. Topologically, residues Tyr-368–Thr-384 are cytoplasmic. Residues Leu-385–Phe-405 form a helical membrane-spanning segment. The Extracellular portion of the chain corresponds to Ser-406–Gly-427. The chain crosses the membrane as a helical span at residues Ser-428–Ile-448. Topologically, residues Asn-449–His-491 are cytoplasmic.

This sequence belongs to the LIMR family. Dimer. Can also form higher oligomers.

It localises to the cell membrane. The protein resides in the endoplasmic reticulum membrane. Its function is as follows. May play a role in lymphocyte development by negatively regulating the canonical Wnt signaling pathway. May act as a LCN1 receptor. This chain is Limb region 1 homolog-like protein (lmbr1l), found in Danio rerio (Zebrafish).